The following is a 142-amino-acid chain: Large ribosomal subunit protein uL13 (142 aa).

The protein belongs to the universal ribosomal protein uL13 family. Part of the 50S ribosomal subunit.

Functionally, this protein is one of the early assembly proteins of the 50S ribosomal subunit, although it is not seen to bind rRNA by itself. It is important during the early stages of 50S assembly. The polypeptide is Large ribosomal subunit protein uL13 (Psychrobacter sp. (strain PRwf-1)).